Consider the following 229-residue polypeptide: Sugar fermentation stimulation protein homolog (229 aa).

The protein belongs to the SfsA family.

The polypeptide is Sugar fermentation stimulation protein homolog (Carboxydothermus hydrogenoformans (strain ATCC BAA-161 / DSM 6008 / Z-2901)).